We begin with the raw amino-acid sequence, 121 residues long: Large ribosomal subunit protein uL14 (121 aa).

The protein belongs to the universal ribosomal protein uL14 family. As to quaternary structure, part of the 50S ribosomal subunit. Forms a cluster with proteins L3 and L19. In the 70S ribosome, L14 and L19 interact and together make contacts with the 16S rRNA in bridges B5 and B8.

Functionally, binds to 23S rRNA. Forms part of two intersubunit bridges in the 70S ribosome. The protein is Large ribosomal subunit protein uL14 of Prochlorococcus marinus (strain MIT 9303).